A 432-amino-acid chain; its full sequence is Glutamyl-tRNA reductase (432 aa).

Substrate-binding positions include 55-58 (TCNR), Ser114, 119-121 (ETQ), and Gln125. The active-site Nucleophile is Cys56. 194 to 199 (GAGEMI) contributes to the NADP(+) binding site.

It belongs to the glutamyl-tRNA reductase family. Homodimer.

It catalyses the reaction (S)-4-amino-5-oxopentanoate + tRNA(Glu) + NADP(+) = L-glutamyl-tRNA(Glu) + NADPH + H(+). Its pathway is porphyrin-containing compound metabolism; protoporphyrin-IX biosynthesis; 5-aminolevulinate from L-glutamyl-tRNA(Glu): step 1/2. In terms of biological role, catalyzes the NADPH-dependent reduction of glutamyl-tRNA(Glu) to glutamate 1-semialdehyde (GSA). The chain is Glutamyl-tRNA reductase from Burkholderia ambifaria (strain ATCC BAA-244 / DSM 16087 / CCUG 44356 / LMG 19182 / AMMD) (Burkholderia cepacia (strain AMMD)).